The primary structure comprises 147 residues: Bis(5'-nucleosyl)-tetraphosphatase [asymmetrical] (147 aa).

N-acetylalanine is present on alanine 2. The region spanning 2–139 is the Nudix hydrolase domain; that stretch reads ALRACGLIIF…EMKATLQEGH (138 aa). A Nudix box motif is present at residues 43–64; the sequence is GHVDPGENDLETALRETREETG.

The protein belongs to the Nudix hydrolase family. The cofactor is a divalent metal cation.

The catalysed reaction is P(1),P(4)-bis(5'-guanosyl) tetraphosphate + H2O = GMP + GTP + 2 H(+). It carries out the reaction a 5'-end CoA-ribonucleoside in mRNA + H2O = a 5'-end phospho-adenosine-phospho-ribonucleoside in mRNA + (R)-4'-phosphopantetheine + 2 H(+). The enzyme catalyses a 5'-end FAD-phospho-ribonucleoside in mRNA + H2O = a 5'-end phospho-adenosine-phospho-ribonucleoside in mRNA + FMN + 2 H(+). Catalyzes the asymmetric hydrolysis of diadenosine 5',5'''-P1,P4-tetraphosphate (Ap4A) to yield AMP and ATP. Exhibits decapping activity towards FAD-capped RNAs and dpCoA-capped RNAs in vitro. In Mus musculus (Mouse), this protein is Bis(5'-nucleosyl)-tetraphosphatase [asymmetrical] (Nudt2).